We begin with the raw amino-acid sequence, 221 residues long: Large ribosomal subunit protein uL4 (221 aa).

The tract at residues 47-77 is disordered; that stretch reads GTASTKTRGEVSGGGRKPWIQKHTGRARQGS.

It belongs to the universal ribosomal protein uL4 family. As to quaternary structure, part of the 50S ribosomal subunit.

In terms of biological role, one of the primary rRNA binding proteins, this protein initially binds near the 5'-end of the 23S rRNA. It is important during the early stages of 50S assembly. It makes multiple contacts with different domains of the 23S rRNA in the assembled 50S subunit and ribosome. Its function is as follows. Forms part of the polypeptide exit tunnel. The sequence is that of Large ribosomal subunit protein uL4 from Thermosipho melanesiensis (strain DSM 12029 / CIP 104789 / BI429).